A 281-amino-acid chain; its full sequence is 2,3,4,5-tetrahydropyridine-2,6-dicarboxylate N-succinyltransferase (281 aa).

The substrate site is built by R108 and D145.

It belongs to the transferase hexapeptide repeat family. In terms of assembly, homotrimer.

It localises to the cytoplasm. The catalysed reaction is (S)-2,3,4,5-tetrahydrodipicolinate + succinyl-CoA + H2O = (S)-2-succinylamino-6-oxoheptanedioate + CoA. It functions in the pathway amino-acid biosynthesis; L-lysine biosynthesis via DAP pathway; LL-2,6-diaminopimelate from (S)-tetrahydrodipicolinate (succinylase route): step 1/3. The sequence is that of 2,3,4,5-tetrahydropyridine-2,6-dicarboxylate N-succinyltransferase from Rhodopseudomonas palustris (strain BisA53).